The sequence spans 513 residues: ATP synthase subunit alpha (513 aa).

169–176 (GDRQIGKT) contributes to the ATP binding site.

The protein belongs to the ATPase alpha/beta chains family. As to quaternary structure, F-type ATPases have 2 components, CF(1) - the catalytic core - and CF(0) - the membrane proton channel. CF(1) has five subunits: alpha(3), beta(3), gamma(1), delta(1), epsilon(1). CF(0) has three main subunits: a(1), b(2) and c(9-12). The alpha and beta chains form an alternating ring which encloses part of the gamma chain. CF(1) is attached to CF(0) by a central stalk formed by the gamma and epsilon chains, while a peripheral stalk is formed by the delta and b chains.

Its subcellular location is the cell inner membrane. It catalyses the reaction ATP + H2O + 4 H(+)(in) = ADP + phosphate + 5 H(+)(out). Its function is as follows. Produces ATP from ADP in the presence of a proton gradient across the membrane. The alpha chain is a regulatory subunit. This Francisella tularensis subsp. tularensis (strain SCHU S4 / Schu 4) protein is ATP synthase subunit alpha.